We begin with the raw amino-acid sequence, 93 residues long: Phosphoribosyl-ATP pyrophosphatase (93 aa).

Belongs to the PRA-PH family.

It localises to the cytoplasm. The catalysed reaction is 1-(5-phospho-beta-D-ribosyl)-ATP + H2O = 1-(5-phospho-beta-D-ribosyl)-5'-AMP + diphosphate + H(+). It functions in the pathway amino-acid biosynthesis; L-histidine biosynthesis; L-histidine from 5-phospho-alpha-D-ribose 1-diphosphate: step 2/9. The sequence is that of Phosphoribosyl-ATP pyrophosphatase from Mycolicibacterium vanbaalenii (strain DSM 7251 / JCM 13017 / BCRC 16820 / KCTC 9966 / NRRL B-24157 / PYR-1) (Mycobacterium vanbaalenii).